Consider the following 226-residue polypeptide: CD9 antigen (226 aa).

Residues 1 to 12 (MPVKGGTKCIKY) are Cytoplasmic-facing. A lipid anchor (S-palmitoyl cysteine) is attached at cysteine 9. The chain crosses the membrane as a helical span at residues 13–33 (LLFGFNFIFWLAGIAVLAVGL). Residues 34-53 (WLRFDSQTKSIFEQDSQPSS) lie on the Extracellular side of the membrane. A helical membrane pass occupies residues 54 to 74 (FYTGVYILIGAGALMMLVGFL). The Cytoplasmic segment spans residues 75-85 (GCCGAVQESQC). Residues cysteine 76, cysteine 77, and cysteine 85 are each lipidated (S-palmitoyl cysteine). A helical transmembrane segment spans residues 86–109 (MLGLFFGFLLVIFAIEIAAAIWGY). Residues 110–193 (SHKDEVIQEV…KEVFHNKFHI (84 aa)) are Extracellular-facing. Disulfide bonds link cysteine 150/cysteine 179 and cysteine 151/cysteine 165. Residues 194-219 (IGAVGIGIAVVMIFGMIFSMILCCAI) traverse the membrane as a helical segment. Residues cysteine 216 and cysteine 217 are each lipidated (S-palmitoyl cysteine). The Cytoplasmic portion of the chain corresponds to 220 to 226 (RRSREMV).

This sequence belongs to the tetraspanin (TM4SF) family. Forms both disulfide-linked homodimers and higher homooligomers as well as heterooligomers with other members of the tetraspanin family. Interacts (via the second extracellular domain) with integrin ITGAV:ITGB3. Interacts with integrin ITGA6:ITGB1; interaction takes place in oocytes and is involved in sperm-egg fusion. Part of integrin-tetraspanin complexes composed of CD81, beta-1 and beta-2 integrins in the membrane of monocyte/macrophages. Interacts with CD63; identified in a complex with CD63 and ITGB3. Associates with CR2/CD21 and with PTGFRN/CD9P1. Part of a complex composed of CD9, CD81, PTGFRN and IGSF8. Interacts directly with IGSF8. Interacts with PDPN; this interaction is homophilic and attenuates platelet aggregation and pulmonary metastasis induced by PDPN. Interacts (on T cell side) with CD81 at immunological synapses between antigen-presenting cells and T cells. Post-translationally, palmitoylated at a low, basal level in unstimulated platelets. The level of palmitoylation increases when platelets are activated by thrombin (in vitro). The protein exists in three forms with molecular masses between 22 and 27 kDa, and is known to carry covalently linked fatty acids. Palmitoylation by ZDHHC2 regulates CD9 expression, association with other tetraspanin family proteins and function in cell adhesion.

It is found in the cell membrane. The protein resides in the membrane. The protein localises to the secreted. It localises to the extracellular exosome. Its function is as follows. Integral membrane protein associated with integrins, which regulates different processes, such as sperm-egg fusion, platelet activation and aggregation, and cell adhesion. Present at the cell surface of oocytes and plays a key role in sperm-egg fusion, possibly by organizing multiprotein complexes and the morphology of the membrane required for the fusion. In myoblasts, associates with CD81 and PTGFRN and inhibits myotube fusion during muscle regeneration. In macrophages, associates with CD81 and beta-1 and beta-2 integrins, and prevents macrophage fusion into multinucleated giant cells specialized in ingesting complement-opsonized large particles. Also prevents the fusion between mononuclear cell progenitors into osteoclasts in charge of bone resorption. Acts as a receptor for PSG17. Involved in platelet activation and aggregation. Regulates paranodal junction formation. Involved in cell adhesion, cell motility and tumor metastasis. In Felis catus (Cat), this protein is CD9 antigen.